Here is a 506-residue protein sequence, read N- to C-terminus: Glutamate--tRNA ligase (506 aa).

A 'HIGH' region motif is present at residues 23–33; the sequence is PSPTGTPHVGL. The 'KMSKS' region motif lies at 267-271; the sequence is KLSKR. Residue Lys-270 coordinates ATP.

It belongs to the class-I aminoacyl-tRNA synthetase family. Glutamate--tRNA ligase type 1 subfamily. As to quaternary structure, monomer.

It localises to the cytoplasm. It carries out the reaction tRNA(Glu) + L-glutamate + ATP = L-glutamyl-tRNA(Glu) + AMP + diphosphate. Catalyzes the attachment of glutamate to tRNA(Glu) in a two-step reaction: glutamate is first activated by ATP to form Glu-AMP and then transferred to the acceptor end of tRNA(Glu). In Clavibacter michiganensis subsp. michiganensis (strain NCPPB 382), this protein is Glutamate--tRNA ligase.